The chain runs to 206 residues: 2-oxoglutarate-dependent dioxygenase iboH (206 aa).

The region spanning 51-157 (PSTTTLVLLH…RYSIAYFLRP (107 aa)) is the Fe2OG dioxygenase domain. Fe cation is bound by residues His75, Asp77, and His134. 2-oxoglutarate is bound at residue Arg148.

This sequence belongs to the iron/ascorbate-dependent oxidoreductase family. Requires Fe(2+) as cofactor.

It carries out the reaction L-glutamate + 2-oxoglutarate + O2 = (3R)-3-hydroxy-L-glutamate + succinate + CO2. The protein operates within secondary metabolite biosynthesis. Functionally, 2-oxoglutarate-dependent dioxygenase; part of the gene cluster that mediates the biosynthesis of the psychoactive metabolites ibotenic acid and muscimol. The first committed step is glutamate hydroxylation by the 2-oxoglutarate-dependent dioxygenase iboH, and the last step is decarboxylation of ibotenic acid to muscimol by the decarboxylase iboD. The order of the intermediate reactions is somewhat ambiguous. IboA likely activates the carboxylic acid at position 5 to introduce an amide bond, and the flavin monooxygenase iboF generates the N-O bond. There are several options for the latter step. One option is that iboF directly hydroxylates the amide nitrogen formed by iboA to produce a hydroxamic acid species. Another option is that iboF hydroxylates an external N-containing compound, whose resulting N-O bond is subsequently introduced into the hydroxyglutamate scaffold. The paralogous PLP-dependent cystathionine gamma-synthase-like enzymes iboG1 and iboG2 are likely involved in substitution of the OH group at position 3 by the O-N moiety. The first cyclic intermediate is most probably tricholomic acid which is likely desaturated to ibotenic acid by the cytochrome P450 monooxygenase iboC. The polypeptide is 2-oxoglutarate-dependent dioxygenase iboH (Amanita muscaria (strain Koide BX008)).